The primary structure comprises 464 residues: Cysteine--tRNA ligase (464 aa).

Cysteine 28 is a binding site for Zn(2+). The 'HIGH' region motif lies at 30 to 40 (VTVYDFCHIGH). Zn(2+) contacts are provided by cysteine 209, histidine 234, and glutamate 238. Positions 266–270 (KMSKS) match the 'KMSKS' region motif. Residue lysine 269 participates in ATP binding.

Belongs to the class-I aminoacyl-tRNA synthetase family. Monomer. Zn(2+) is required as a cofactor.

Its subcellular location is the cytoplasm. The enzyme catalyses tRNA(Cys) + L-cysteine + ATP = L-cysteinyl-tRNA(Cys) + AMP + diphosphate. The chain is Cysteine--tRNA ligase (cysS) from Buchnera aphidicola subsp. Acyrthosiphon pisum (strain APS) (Acyrthosiphon pisum symbiotic bacterium).